Here is a 354-residue protein sequence, read N- to C-terminus: Histidinol-phosphate aminotransferase (354 aa).

Lys-222 bears the N6-(pyridoxal phosphate)lysine mark.

The protein belongs to the class-II pyridoxal-phosphate-dependent aminotransferase family. Histidinol-phosphate aminotransferase subfamily. In terms of assembly, homodimer. Pyridoxal 5'-phosphate is required as a cofactor.

The catalysed reaction is L-histidinol phosphate + 2-oxoglutarate = 3-(imidazol-4-yl)-2-oxopropyl phosphate + L-glutamate. Its pathway is amino-acid biosynthesis; L-histidine biosynthesis; L-histidine from 5-phospho-alpha-D-ribose 1-diphosphate: step 7/9. This Staphylococcus carnosus (strain TM300) protein is Histidinol-phosphate aminotransferase.